Consider the following 333-residue polypeptide: Terminal uridylyltransferase 4 (333 aa).

Residues serine 54 and 65 to 68 each bind UTP; that span reads SDVD. Positions 66 and 68 each coordinate Mg(2+). Arginine 121 is a binding site for RNA. Residues 144-148, lysine 169, lysine 173, and 188-189 contribute to the UTP site; these read GVRNS and SY. A PAP-associated domain is found at 237–302; sequence LGTQVLDFLH…WCIEDPYELN (66 aa).

This sequence belongs to the DNA polymerase type-B-like family. In terms of assembly, monomer. Mg(2+) is required as a cofactor. Requires Mn(2+) as cofactor.

It carries out the reaction RNA(n) + UTP = RNA(n)-3'-uridine ribonucleotide + diphosphate. Its activity is regulated as follows. The 3' uridylated RNA substrate is involved in the selective incorporation of UTP; UTP binding is favored due to the constraint posed on the positioning of the NTP base by the continuous stacking interactions between Tyr-189 side chain, the bound NTP, and the terminal nucleoside base of the RNA substrate. In terms of biological role, terminal uridylyltransferase which, specifically, catalyzes the addition of Us to the 3'-hydroxyl group of single-stranded RNAs with a 3'-terminal U. The polypeptide is Terminal uridylyltransferase 4 (Trypanosoma brucei brucei (strain 927/4 GUTat10.1)).